The chain runs to 601 residues: Leucine zipper putative tumor suppressor 1 (601 aa).

The N-myristoyl glycine moiety is linked to residue glycine 2. The disordered stretch occupies residues 135 to 190 (GAILHSSPESTNHQLHPMPPDKPKEQELKPGLCSGALSDSGRNSMSSLPTHSTTSS). Residues 153–162 (PPDKPKEQEL) show a composition bias toward basic and acidic residues. The segment covering 174–190 (SGRNSMSSLPTHSTTSS) has biased composition (polar residues). A coiled-coil region spans residues 255–573 (PLSTDECTIQ…RLEKALQQLA (319 aa)).

It belongs to the LZTS family. As to quaternary structure, binds EEF1G, TLK2 and CDK1. Phosphorylated on serine residues. Hyperphosphorylated by the cAMP-dependent kinase PKA during cell-cycle progression. In terms of tissue distribution, highly expressed in brain, in particular in cortex, the CA2 region of the hippocampus, olfactory bulb, striatum and pons. Not detectable in the other tissues tested.

The protein resides in the cytoplasm. It is found in the cell membrane. Its subcellular location is the cell projection. The protein localises to the dendritic spine. It localises to the postsynaptic density. The protein resides in the synapse. In terms of biological role, involved in the regulation of cell growth. May stabilize the active CDC2-cyclin B1 complex and thereby contribute to the regulation of the cell cycle and the prevention of uncontrolled cell proliferation. May act as tumor suppressor. This is Leucine zipper putative tumor suppressor 1 (Lzts1) from Rattus norvegicus (Rat).